Consider the following 125-residue polypeptide: Prefoldin subunit beta (125 aa).

Belongs to the prefoldin subunit beta family. In terms of assembly, heterohexamer of two alpha and four beta subunits.

Its subcellular location is the cytoplasm. In terms of biological role, molecular chaperone capable of stabilizing a range of proteins. Seems to fulfill an ATP-independent, HSP70-like function in archaeal de novo protein folding. The sequence is that of Prefoldin subunit beta from Halobacterium salinarum (strain ATCC 29341 / DSM 671 / R1).